Consider the following 405-residue polypeptide: 11-beta-hydroxysteroid dehydrogenase type 2 (405 aa).

82–111 contributes to the NAD(+) binding site; it reads TRAVLITGCDSGFGKETAKKLDSMGFTVLA. Ser-219 contacts substrate. Tyr-232 functions as the Proton acceptor in the catalytic mechanism. Residues 335 to 339 form an essential for protein stability region; that stretch reads RRRYY. The span at 377–387 shows a compositional bias: low complexity; it reads QPGQPGTTPPQ. The tract at residues 377-405 is disordered; sequence QPGQPGTTPPQDAAQDPNLSPGPSPAVAR. Residues 396 to 405 are compositionally biased toward pro residues; that stretch reads SPGPSPAVAR.

Belongs to the short-chain dehydrogenases/reductases (SDR) family. As to quaternary structure, interacts with ligand-free cytoplasmic NR3C2. In terms of tissue distribution, expressed in kidney, placenta, pancreas, prostate, ovary, small intestine and colon, and in lower levels in the spleen and testis. At midgestation, expressed at high levels in placenta and in fetal kidney and, at much lower levels, in fetal lung and testis.

It is found in the microsome. It localises to the endoplasmic reticulum. The enzyme catalyses an 11beta-hydroxysteroid + NAD(+) = an 11-oxosteroid + NADH + H(+). It carries out the reaction cortisol + NAD(+) = cortisone + NADH + H(+). It catalyses the reaction corticosterone + NAD(+) = 11-dehydrocorticosterone + NADH + H(+). The catalysed reaction is 11beta,17beta-dihydroxyandrost-4-ene-3-one + NAD(+) = 17beta-hydroxyandrost-4-ene-3,11-dione + NADH + H(+). The enzyme catalyses 11beta-hydroxyandrost-4-ene-3,17-dione + NAD(+) = androst-4-ene-3,11,17-trione + NADH + H(+). It functions in the pathway steroid metabolism. Inhibited by glycyrrhetinic acid (derived from liquorice). In terms of biological role, catalyzes the conversion of biologically active 11beta-hydroxyglucocorticoids (11beta-hydroxysteroid) such as cortisol, to inactive 11-ketoglucocorticoids (11-oxosteroid) such as cortisone, in the presence of NAD(+). Functions as a dehydrogenase (oxidase), thereby decreasing the concentration of active glucocorticoids, thus protecting the nonselective mineralocorticoid receptor from occupation by glucocorticoids. Plays an important role in maintaining glucocorticoids balance during preimplantation and protects the fetus from excessive maternal corticosterone exposure. Catalyzes the oxidation of 11beta-hydroxytestosterone (11beta,17beta-dihydroxyandrost-4-ene-3-one) to 11-ketotestosterone (17beta-hydroxyandrost-4-ene-3,11-dione), a major bioactive androgen. Catalyzes the conversion of 11beta-hydroxyandrostenedione (11beta-hydroxyandrost-4-ene-3,17-dione) to 11-ketoandrostenedione (androst-4-ene-3,11,17-trione), which can be further metabolized to 11-ketotestosterone. Converts 7-beta-25-dihydroxycholesterol to 7-oxo-25-hydroxycholesterol in vitro. 7-beta-25-dihydroxycholesterol (not 7-oxo-25-hydroxycholesterol) acts as a ligand for the G-protein-coupled receptor (GPCR) Epstein-Barr virus-induced gene 2 (EBI2) and may thereby regulate immune cell migration. May protect ovulating oocytes and fertilizing spermatozoa from the adverse effects of cortisol. The sequence is that of 11-beta-hydroxysteroid dehydrogenase type 2 from Homo sapiens (Human).